A 572-amino-acid polypeptide reads, in one-letter code: Putative acyl-CoA synthetase CCNA_01223 (572 aa).

The protein belongs to the ATP-dependent AMP-binding enzyme family.

It participates in lipid metabolism; sphingolipid metabolism. Involved in de novo bacterial ceramide synthesis. This Caulobacter vibrioides (strain NA1000 / CB15N) (Caulobacter crescentus) protein is Putative acyl-CoA synthetase CCNA_01223.